Here is a 203-residue protein sequence, read N- to C-terminus: Histidine biosynthesis bifunctional protein HisIE (203 aa).

Positions 1–114 are phosphoribosyl-AMP cyclohydrolase; it reads MLTEQQRREL…FGDASHQWLF (114 aa). Residues 115 to 203 are phosphoribosyl-ATP pyrophosphohydrolase; that stretch reads LYQLEQLLAE…VIDDLRKRHQ (89 aa).

In the N-terminal section; belongs to the PRA-CH family. The protein in the C-terminal section; belongs to the PRA-PH family.

The protein localises to the cytoplasm. It catalyses the reaction 1-(5-phospho-beta-D-ribosyl)-ATP + H2O = 1-(5-phospho-beta-D-ribosyl)-5'-AMP + diphosphate + H(+). The enzyme catalyses 1-(5-phospho-beta-D-ribosyl)-5'-AMP + H2O = 1-(5-phospho-beta-D-ribosyl)-5-[(5-phospho-beta-D-ribosylamino)methylideneamino]imidazole-4-carboxamide. It participates in amino-acid biosynthesis; L-histidine biosynthesis; L-histidine from 5-phospho-alpha-D-ribose 1-diphosphate: step 2/9. The protein operates within amino-acid biosynthesis; L-histidine biosynthesis; L-histidine from 5-phospho-alpha-D-ribose 1-diphosphate: step 3/9. The protein is Histidine biosynthesis bifunctional protein HisIE (hisI) of Salmonella typhi.